Consider the following 865-residue polypeptide: Alanine--tRNA ligase (865 aa).

Residues His-568, His-572, Cys-670, and His-674 each contribute to the Zn(2+) site.

It belongs to the class-II aminoacyl-tRNA synthetase family. Zn(2+) serves as cofactor.

Its subcellular location is the cytoplasm. It carries out the reaction tRNA(Ala) + L-alanine + ATP = L-alanyl-tRNA(Ala) + AMP + diphosphate. In terms of biological role, catalyzes the attachment of alanine to tRNA(Ala) in a two-step reaction: alanine is first activated by ATP to form Ala-AMP and then transferred to the acceptor end of tRNA(Ala). Also edits incorrectly charged Ser-tRNA(Ala) and Gly-tRNA(Ala) via its editing domain. The sequence is that of Alanine--tRNA ligase from Vibrio campbellii (strain ATCC BAA-1116).